A 512-amino-acid chain; its full sequence is Respiratory nitrate reductase 1 beta chain (512 aa).

3 consecutive 4Fe-4S ferredoxin-type domains span residues 7–35 (VGMV…SREG), 175–206 (TFMM…KREE), and 208–237 (GIVL…FNWK). Cysteine 16, cysteine 19, cysteine 22, cysteine 26, cysteine 184, cysteine 187, and cysteine 192 together coordinate [4Fe-4S] cluster. Residues cysteine 196, cysteine 217, and cysteine 223 each contribute to the [3Fe-4S] cluster site. The [4Fe-4S] cluster site is built by cysteine 227, cysteine 244, cysteine 247, cysteine 259, and cysteine 263.

In terms of assembly, dimer of heterotrimers each composed of an alpha, a beta and a gamma chain. Alpha and beta are catalytic chains; gamma chains are involved in binding the enzyme complex to the cytoplasmic membrane. It depends on [4Fe-4S] cluster as a cofactor. [3Fe-4S] cluster is required as a cofactor.

It localises to the cell membrane. The catalysed reaction is nitrate + a quinol = a quinone + nitrite + H2O. Functionally, the nitrate reductase enzyme complex allows E.coli to use nitrate as an electron acceptor during anaerobic growth. The beta chain is an electron transfer unit containing four cysteine clusters involved in the formation of iron-sulfur centers. Electrons are transferred from the gamma chain to the molybdenum cofactor of the alpha subunit. This is Respiratory nitrate reductase 1 beta chain (narH) from Escherichia coli (strain K12).